The sequence spans 139 residues: Transmembrane protein 250 (139 aa).

The next 2 membrane-spanning stretches (helical) occupy residues 56–76 (FLLY…LAAL) and 116–136 (VYGI…FMVF).

As to quaternary structure, (Microbial infection) Interacts with herpes simplex virus 1/HHV-1 protein CVC2/UL25.

The protein resides in the membrane. It is found in the nucleus. The protein localises to the cytoplasm. In terms of biological role, may play a role in cell proliferation by promoting progression into S phase. (Microbial infection) Promotes human herpes simplex virus 1/HHV-1 proliferation. This chain is Transmembrane protein 250, found in Homo sapiens (Human).